The sequence spans 1249 residues: Fanconi anemia group J protein (1249 aa).

Residues 11–442 (GGVKIYFPYK…KDHEPLRAVC (432 aa)) form the Helicase ATP-binding domain. Polar residues predominate over residues 102-127 (QGTSRHFNYPSTPPSERNGTSSTCQD). The segment at 102–131 (QGTSRHFNYPSTPPSERNGTSSTCQDSPEK) is disordered. The Nuclear localization signal motif lies at 158–175 (KKRIRPLETTQQIRKRHC). 185–192 (AKVDSGKT) is an ATP binding site. [4Fe-4S] cluster-binding residues include C283, C298, C310, and C350. The DEAH box motif lies at 393–396 (DEAH). 7 positions are modified to phosphoserine: S505, S927, S930, S956, S990, S1004, and S1032. Positions 888–1063 (HQKVLNVSIK…ESSNLTVNTS (176 aa)) are interaction with BRCA1. 2 disordered regions span residues 1018–1042 (KATPELGSSENSASSPPRFKTEKME) and 1108–1127 (VSEEDKQSTSNRDFETEAED). Residues 1023–1032 (LGSSENSASS) are compositionally biased toward polar residues. Over residues 1110-1122 (EEDKQSTSNRDFE) the composition is skewed to basic and acidic residues. The residue at position 1237 (S1237) is a Phosphoserine. Position 1249 is an N6-acetyllysine (K1249).

The protein belongs to the DEAD box helicase family. DEAH subfamily. In terms of assembly, interacts with the replication protein A complex (RPA) via the RPA1 subunit; following DNA damage they colocalize in foci in the nucleus. Binds directly to the BRCT domains of BRCA1. Interacts with the CIA complex components CIAO1, CIAO2B and MMS19. [4Fe-4S] cluster is required as a cofactor. Phosphorylated. Phosphorylation is necessary for interaction with BRCA1, and is cell-cycle regulated. Post-translationally, acetylation at Lys-1249 facilitates DNA end processing required for repair and checkpoint signaling. In terms of tissue distribution, ubiquitously expressed, with highest levels in testis.

It localises to the nucleus. The protein resides in the cytoplasm. The enzyme catalyses Couples ATP hydrolysis with the unwinding of duplex DNA at the replication fork by translocating in the 5'-3' direction. This creates two antiparallel DNA single strands (ssDNA). The leading ssDNA polymer is the template for DNA polymerase III holoenzyme which synthesizes a continuous strand.. It carries out the reaction ATP + H2O = ADP + phosphate + H(+). Helicase activity on forked substrates is stimulated by replication protein A complex heterotrimer (RPA1, RPA2, RPA3). Helicase activity on G-quadruplex DNA is stimulated 3-fold by RPA, and inhibited by MSH2/MSH6. Unwinding of G-quadruplex DNA is inhibited by ATP-gamma-S and telomestatin (TMS); TMA does not inhibit unwinding of forked-duplex DNA. Helicase activity on dsDNA and G-quadruplex DNA is inhibited by porphyrin derivatives meso-tetra (N-methyl-4-pyridyl) porphine tetra tosylate (T4) and N-methyl mesoporphyrin IX (NMM). Its function is as follows. DNA-dependent ATPase and 5'-3' DNA helicase required for the maintenance of chromosomal stability. Acts late in the Fanconi anemia pathway, after FANCD2 ubiquitination. Involved in the repair of DNA double-strand breaks by homologous recombination in a manner that depends on its association with BRCA1. Involved in the repair of abasic sites at replication forks by promoting the degradation of DNA-protein cross-links: acts by catalyzing unfolding of HMCES DNA-protein cross-link via its helicase activity, exposing the underlying DNA and enabling cleavage of the DNA-protein adduct by the SPRTN metalloprotease. Can unwind RNA:DNA substrates. Unwinds G-quadruplex DNA; unwinding requires a 5'-single stranded tail. This Homo sapiens (Human) protein is Fanconi anemia group J protein.